We begin with the raw amino-acid sequence, 629 residues long: tRNA uridine 5-carboxymethylaminomethyl modification enzyme MnmG (629 aa).

13–18 (GGGHAG) provides a ligand contact to FAD. 273 to 287 (GPRYCPSIEDKINRF) is a binding site for NAD(+).

It belongs to the MnmG family. Homodimer. Heterotetramer of two MnmE and two MnmG subunits. The cofactor is FAD.

It is found in the cytoplasm. NAD-binding protein involved in the addition of a carboxymethylaminomethyl (cmnm) group at the wobble position (U34) of certain tRNAs, forming tRNA-cmnm(5)s(2)U34. The polypeptide is tRNA uridine 5-carboxymethylaminomethyl modification enzyme MnmG (Shewanella piezotolerans (strain WP3 / JCM 13877)).